Consider the following 1619-residue polypeptide: Rap-GAP domain-containing protein DDB_G0281809 (1619 aa).

Disordered regions lie at residues 128-249 (SMSN…TTPI), 289-316 (QQQQ…MPGS), 907-974 (SIGG…PYIN), and 1134-1153 (ISNN…TSNN). 2 stretches are compositionally biased toward low complexity: residues 130–204 (SNNN…SLSL) and 231–249 (QISA…TTPI). Residues 265 to 295 (FNEVVQQQQQQQQQQQQQQQQQQQQQQQQQS) are a coiled coil. Low complexity-rich tracts occupy residues 916 to 926 (SGNSSQPSSTG) and 934 to 965 (SGSK…NGGS). The 222-residue stretch at 1273–1494 (LNMLDSVSER…TNRKKLISDI (222 aa)) folds into the Rap-GAP domain. The tract at residues 1554 to 1619 (IGTFTLPPPP…LSQSEDQSHK (66 aa)) is disordered. Residues 1559–1573 (LPPPPISPTISPQPS) are compositionally biased toward pro residues. Positions 1574–1590 (PHLSSSGGSWASSKGGS) are enriched in low complexity. Over residues 1591 to 1619 (TQPTTPSGRTSNFLSRRPNLSQSEDQSHK) the composition is skewed to polar residues.

This chain is Rap-GAP domain-containing protein DDB_G0281809, found in Dictyostelium discoideum (Social amoeba).